The following is a 335-amino-acid chain: MVRRDRLRRMREWWVQVGLLAVPLLAAYLHIPPPQLSPALHSWKSSGKFFTYKGLRIFYQDSVGVVGSPEIVVLLHGFPTSSYDWYKIWEGLTLRFHRVIALDFLGFGFSDKPRPHHYSIFEQASIVEALLRHLGLQNRRINLLSHDYGDIVAQELLYRYKQNRSGRLTIKSLCLSNGGIFPETHRPLLLQKLLKDGGVLSPILTRLMNFFVFSRGLTPVFGPYTRPSESELWDMWAGIRNNDGNLVIDSLLQYINQRKKFRRRWVGALASVTIPIHFIYGPLDPVNPYPEFLELYRKTLPRSTVSILDDHISHYPQLEDPMGFLNAYMGFINSF.

A run of 2 helical transmembrane segments spans residues 13-33 and 63-83; these read WWVQ…HIPP and VGVV…TSSY. Residues 71-310 form the AB hydrolase-1 domain; sequence IVVLLHGFPT…PRSTVSILDD (240 aa). Residues 98–103 carry the RVIALD motif; sequence RVIALD. A glycan (N-linked (GlcNAc...) asparagine) is linked at Asn-163. Residues 266–286 form a helical membrane-spanning segment; it reads VGALASVTIPIHFIYGPLDPV.

It belongs to the AB hydrolase superfamily. Highly expressed in hydatidiform moles, but barely expressed in dermoid cysts. Biallelic expression is detected in blood lymphocytes. Seems to imprinted in an isoform-specific manner rather than in a tissue-specific manner in lymphocytes. Isoform 1 is expressed only from the paternal allele. Isoform 2 is expressed from both the paternal allele and the maternal allele.

It localises to the endoplasmic reticulum membrane. This Homo sapiens (Human) protein is Mesoderm-specific transcript homolog protein (MEST).